The following is a 282-amino-acid chain: MNKSLTEKISAFIITKNESTRVARAINSVKNITDEVIVVDSESTDDTVAIAEKLGAKVVIKPWLGYVGQKSFAESLCVNDWVLNIDADEELSKELQDEIEYIFASHNQDRYLAYQIKLLIMHRNDQKPRMFAPFNKCTRLYNKKFASFANTVNSTTHDSVIFNKDVDFAGKIYLLNEAAYHYSGTSIEQLVTKANFYSNEQAKDLVKQGKKLSNFRLTTEMIWWFFKAFFIRRYFVFGVDGFVDSIIFAFARFLRLTKLRESSLKSKNVIASDYKERGNFMK.

It belongs to the glycosyltransferase 2 family. WaaE/KdtX subfamily.

This is an uncharacterized protein from Rickettsia conorii (strain ATCC VR-613 / Malish 7).